The chain runs to 176 residues: Transmembrane protein 238 (176 aa).

Residues 1–21 (MAAASPVCGSQASAVGASSPP) form a disordered region. Over 1–36 (MAAASPVCGSQASAVGASSPPAPAPAPAAGLGRCRM) the chain is Cytoplasmic. The span at 9-19 (GSQASAVGASS) shows a compositional bias: low complexity. The chain crosses the membrane as a helical span at residues 37–57 (ALLLAVALDVAGMAALLTGVF). Residues 58–69 (AQLQVRGRDFGD) lie on the Extracellular side of the membrane. A helical membrane pass occupies residues 70–90 (LLIYSGALLVFLSLLGWILWY). Over 91–176 (TGNIEISRQE…GSVAAGTGSE (86 aa)) the chain is Cytoplasmic. Low complexity predominate over residues 124-135 (SAPATASPRTTA). The interval 124–156 (SAPATASPRTTAGLRSARRANRAPQPSSSGSRR) is disordered. Serine 175 is subject to Phosphoserine.

It is found in the membrane. The protein is Transmembrane protein 238 (Tmem238) of Mus musculus (Mouse).